Here is a 103-residue protein sequence, read N- to C-terminus: Pyrimidine/purine nucleoside phosphorylase (103 aa).

Belongs to the nucleoside phosphorylase PpnP family.

The catalysed reaction is a purine D-ribonucleoside + phosphate = a purine nucleobase + alpha-D-ribose 1-phosphate. The enzyme catalyses adenosine + phosphate = alpha-D-ribose 1-phosphate + adenine. It carries out the reaction cytidine + phosphate = cytosine + alpha-D-ribose 1-phosphate. It catalyses the reaction guanosine + phosphate = alpha-D-ribose 1-phosphate + guanine. The catalysed reaction is inosine + phosphate = alpha-D-ribose 1-phosphate + hypoxanthine. The enzyme catalyses thymidine + phosphate = 2-deoxy-alpha-D-ribose 1-phosphate + thymine. It carries out the reaction uridine + phosphate = alpha-D-ribose 1-phosphate + uracil. It catalyses the reaction xanthosine + phosphate = alpha-D-ribose 1-phosphate + xanthine. Functionally, catalyzes the phosphorolysis of diverse nucleosides, yielding D-ribose 1-phosphate and the respective free bases. Can use uridine, adenosine, guanosine, cytidine, thymidine, inosine and xanthosine as substrates. Also catalyzes the reverse reactions. The chain is Pyrimidine/purine nucleoside phosphorylase from Shewanella putrefaciens (strain CN-32 / ATCC BAA-453).